Here is an 838-residue protein sequence, read N- to C-terminus: MFWRLGQGFGFQSSSAIEAILDKPEDEINLKELLEENGVLDECKSHNPKLLEYLCKPEVLSQLIDYILEVDETEIPSADGGYEEPEHTRLSYIASEILSSDVWSICEACVENKTLMVKLWSFLDSEGPLNPLQASYFAKVNEHFLDKKTEETVAFIQSIDNFVEKILRHAETSAIMDLLLKFISMDRCNTAIGIADWLYSQGLIQSLLRLLSPYVDPDVQFTVADVIKAIIAISANSNEPGVIGPNSLSRELVSRQTITTLTDYMTDSKAPHSATSLINGVSIVIELIRKNNSDYDVTPVLQMPLDTHPPTTRDPIYLGTMLRLFAEKIPVFQKILLKPSTESDLMPTSFGKIKPLGFERFRICELYAELLHCSNMSLLSDPNGEAMVMQRDHLRDYLFRHNSCARDLVMSDEDDDDSTFSDKNSKDFKETEDMNGAEDMHGRAPQITKDNLNLTTTDSPMSEAEPVSEEEYKDVMETAKALHHGDDDAASDTSYEPLPESVIEDAKKLPVIGDFLKIEFIQNNVIPTILDHFFDYPWNNFLHNVVYDVVQQVLNAPMDKDQNYALAVDMFKQGKITEKIVYGQELNDKKVAKPSGFRAGYMGHLTIIADEVVKFVEHYSSTFDQELLNLINDEKWQNFVNKTLVETRNRDNQLLGGLEPSMVGYLEDMDEGEMLDANNLPEMQFALEQELESNSSDDDVVEVHRELSHNSSSNDEDDGNDEDPLSREMSRRLSFESANDSDQDNRDHFAQYMSQQISDNNANQFSSSDEDDDDDDEVVEWVSRGNENKYPRSNFFINGSDREDFSDSEEEDGNDSSDDDRGFAEEEYSDGLVLNHGK.

Phosphoserine is present on residues serine 411 and serine 418. The tract at residues 411 to 468 (SDEDDDDSTFSDKNSKDFKETEDMNGAEDMHGRAPQITKDNLNLTTTDSPMSEAEPVS) is disordered. Threonine 419 is subject to Phosphothreonine. Basic and acidic residues predominate over residues 423–442 (KNSKDFKETEDMNGAEDMHG). Phosphoserine occurs at positions 425, 459, 468, and 491. Residues 448–460 (TKDNLNLTTTDSP) are compositionally biased toward polar residues. At threonine 493 the chain carries Phosphothreonine. Position 494 is a phosphoserine (serine 494). Residues 690–700 (ELESNSSDDDV) show a composition bias toward acidic residues. Disordered regions lie at residues 690 to 745 (ELES…DQDN) and 757 to 838 (ISDN…NHGK). Residues serine 711 and serine 713 each carry the phosphoserine modification. Residues 714 to 723 (NDEDDGNDED) show a composition bias toward acidic residues. Basic and acidic residues predominate over residues 724-734 (PLSREMSRRLS). Acidic residues-rich tracts occupy residues 768-779 (SDEDDDDDDEVV) and 806-818 (SDSEEEDGNDSSD).

This sequence belongs to the SAPS family. As to quaternary structure, interacts with ppe1 and mis12.

The protein localises to the nucleus. Functionally, has a role in chromosome segregation. May provide a dynamic connection between kinetochore microtubules and kinetochore chromatin. The sequence is that of Extragenic suppressor of kinetochore protein 1 (ekc1) from Schizosaccharomyces pombe (strain 972 / ATCC 24843) (Fission yeast).